A 714-amino-acid polypeptide reads, in one-letter code: MKSILKKAKHFFHTNETVNGENGGEKTAKESESQQHHQQQQQHDENGANPPDQGVDEASNVSQSQPTTSALQTSTSLQPSSSLHQIPQSQSSLELTTNPTQQLPTTPTKQLPTPPPPQQPHSQQQQQQQQQSQSQLNNNDISISTNTNNTTNNTNNNNNIDSTLTTPVPSSENLATLSTSTTSEQQPNSQPTPNNTNTTTSPPPSSASTSNLSTSTTTTTTTTTTTTAAANENTNTTQEQTVSPNKPPQPPNALSQSTTSSSTSSTSLLSSTFSKFKIKLGSGSTKNKDSSSAPGTPHINNNNNTVSSSNKNRSTLVITPGSVNNNNNNQNNHKNNNTTPDHPPEEQKPVEKEVITIATLADFPEDCQKLIRISGIPEEKLIKNIQILAYVLHFRTGRFFKLVDEPPREPRKKFVSERFNDGEKLLEPVEPALLKKMYKDSDQVGKGGFGTVYFAKSTKEKRLVAIKKMPHVTKRQQQQNFREAAILAKCDHPNIVKLHTCHIDKDSNLWIVMEFMEGGTFEEAAKAWKFNENNLAYVAKELLKGLQYLHENHMVHRDLKSANIMMSVEGKVKLIDFGLCEDVATSTPMHMVGSPFWMAPEMIQQKYHSTPVDIWSFAISLLEMANQRPPMMESAVKAMFTVATDGATGFDDPALWSDCFKDFLSLCLKQDPAERATAEELLKHPFIKKADSRDNMENILKKIFLTNSLMNSGF.

Positions 1-12 (MKSILKKAKHFF) are enriched in basic residues. Disordered stretches follow at residues 1–267 (MKSI…SSTS) and 281–349 (GSGS…EQKP). Residues 23–35 (GGEKTAKESESQQ) are compositionally biased toward basic and acidic residues. The span at 62 to 83 (SQSQPTTSALQTSTSLQPSSSL) shows a compositional bias: low complexity. Positions 84–94 (HQIPQSQSSLE) are enriched in polar residues. 2 stretches are compositionally biased toward low complexity: residues 95 to 111 (LTTN…TKQL) and 120 to 166 (PHSQ…TLTT). A compositionally biased stretch (polar residues) spans 167 to 177 (PVPSSENLATL). Low complexity-rich tracts occupy residues 178–241 (STST…QEQT) and 254–267 (LSQS…SSTS). Polar residues predominate over residues 282-294 (SGSTKNKDSSSAP). Low complexity-rich tracts occupy residues 300–314 (NNNN…KNRS) and 324–337 (NNNN…KNNN). A Protein kinase domain is found at 438–687 (YKDSDQVGKG…AEELLKHPFI (250 aa)). ATP is bound by residues 444–452 (VGKGGFGTV) and Lys-467. The active-site Proton acceptor is Asp-558.

Belongs to the protein kinase superfamily. STE Ser/Thr protein kinase family. STE20 subfamily. Mg(2+) serves as cofactor. As to expression, expressed at equal levels in prestalk and prespore cells.

The enzyme catalyses L-seryl-[protein] + ATP = O-phospho-L-seryl-[protein] + ADP + H(+). It catalyses the reaction L-threonyl-[protein] + ATP = O-phospho-L-threonyl-[protein] + ADP + H(+). This is Probable serine/threonine-protein kinase mkcB from Dictyostelium discoideum (Social amoeba).